A 258-amino-acid polypeptide reads, in one-letter code: Type III pantothenate kinase (258 aa).

6-13 (DVGNTNTV) contributes to the ATP binding site. Substrate contacts are provided by residues Tyr-100 and 107–110 (GADR). The active-site Proton acceptor is Asp-109. Asp-129 serves as a coordination point for K(+). ATP is bound at residue Thr-132. A substrate-binding site is contributed by Thr-184.

The protein belongs to the type III pantothenate kinase family. In terms of assembly, homodimer. Requires NH4(+) as cofactor. The cofactor is K(+).

The protein resides in the cytoplasm. It carries out the reaction (R)-pantothenate + ATP = (R)-4'-phosphopantothenate + ADP + H(+). The protein operates within cofactor biosynthesis; coenzyme A biosynthesis; CoA from (R)-pantothenate: step 1/5. In terms of biological role, catalyzes the phosphorylation of pantothenate (Pan), the first step in CoA biosynthesis. The protein is Type III pantothenate kinase of Bacillus licheniformis (strain ATCC 14580 / DSM 13 / JCM 2505 / CCUG 7422 / NBRC 12200 / NCIMB 9375 / NCTC 10341 / NRRL NRS-1264 / Gibson 46).